The sequence spans 359 residues: Aminomethyltransferase (359 aa).

Belongs to the GcvT family. In terms of assembly, the glycine cleavage system is composed of four proteins: P, T, L and H.

The enzyme catalyses N(6)-[(R)-S(8)-aminomethyldihydrolipoyl]-L-lysyl-[protein] + (6S)-5,6,7,8-tetrahydrofolate = N(6)-[(R)-dihydrolipoyl]-L-lysyl-[protein] + (6R)-5,10-methylene-5,6,7,8-tetrahydrofolate + NH4(+). In terms of biological role, the glycine cleavage system catalyzes the degradation of glycine. This is Aminomethyltransferase from Idiomarina loihiensis (strain ATCC BAA-735 / DSM 15497 / L2-TR).